A 271-amino-acid polypeptide reads, in one-letter code: NADH-quinone oxidoreductase subunit B (271 aa).

The [4Fe-4S] cluster site is built by cysteine 37, cysteine 38, cysteine 103, and cysteine 132. A disordered region spans residues 227–271 (LAPPSVFGRAKRIPVDPKPSDEARAHGPGPTTESIGDVDGPDRGI). Residues 239–251 (IPVDPKPSDEARA) show a composition bias toward basic and acidic residues.

It belongs to the complex I 20 kDa subunit family. NDH-1 is composed of 14 different subunits. Subunits NuoB, C, D, E, F, and G constitute the peripheral sector of the complex. It depends on [4Fe-4S] cluster as a cofactor.

The protein localises to the cell membrane. It carries out the reaction a quinone + NADH + 5 H(+)(in) = a quinol + NAD(+) + 4 H(+)(out). Functionally, NDH-1 shuttles electrons from NADH, via FMN and iron-sulfur (Fe-S) centers, to quinones in the respiratory chain. The immediate electron acceptor for the enzyme in this species is believed to be a menaquinone. Couples the redox reaction to proton translocation (for every two electrons transferred, four hydrogen ions are translocated across the cytoplasmic membrane), and thus conserves the redox energy in a proton gradient. This chain is NADH-quinone oxidoreductase subunit B, found in Frankia casuarinae (strain DSM 45818 / CECT 9043 / HFP020203 / CcI3).